Reading from the N-terminus, the 247-residue chain is Proteasome subunit alpha (247 aa).

The protein belongs to the peptidase T1A family. The 20S proteasome core is composed of 14 alpha and 14 beta subunits that assemble into four stacked heptameric rings, resulting in a barrel-shaped structure. The two inner rings, each composed of seven catalytic beta subunits, are sandwiched by two outer rings, each composed of seven alpha subunits. The catalytic chamber with the active sites is on the inside of the barrel. Has a gated structure, the ends of the cylinder being occluded by the N-termini of the alpha-subunits. Is capped at one or both ends by the proteasome regulatory ATPase, PAN.

The protein localises to the cytoplasm. The formation of the proteasomal ATPase PAN-20S proteasome complex, via the docking of the C-termini of PAN into the intersubunit pockets in the alpha-rings, triggers opening of the gate for substrate entry. Interconversion between the open-gate and close-gate conformations leads to a dynamic regulation of the 20S proteasome proteolysis activity. Component of the proteasome core, a large protease complex with broad specificity involved in protein degradation. The sequence is that of Proteasome subunit alpha from Methanosarcina acetivorans (strain ATCC 35395 / DSM 2834 / JCM 12185 / C2A).